A 352-amino-acid chain; its full sequence is MRVLGLNQERGEVELVVEVLEDLYYLFLLVRKGDVVYGWTTRQLRIERATGEERGERIPVYLGVEVEKVSYAKFSEKLRFTGRVVEAPEEVYAKGSFHTIQVGVGDRVKIVKKSGIDGFTRNILEKAASKIRRVLLISVGDEEVAVGYLSPVGVEVRAVVGYSPVGRGKESSLDERYREPIASIVQRIFESGRAEHVDEVVVAVNERLAEVVSRVLGELGVKARVVKVSEGGEAGIYELLRGGQSRELLSSVRLPLELAEVERVLQELFSGKGKAVAGLENVEKVAEWGIVKTLIVSDALLFGEESRERVLKVLGEVFSRNGKIFIVPEESEAGRKLKPFGGALAELYYSLE.

It belongs to the eukaryotic release factor 1 family. Pelota subfamily. As to quaternary structure, monomer. It depends on a divalent metal cation as a cofactor.

Its subcellular location is the cytoplasm. May function in recognizing stalled ribosomes, interact with stem-loop structures in stalled mRNA molecules, and effect endonucleolytic cleavage of the mRNA. May play a role in the release non-functional ribosomes and degradation of damaged mRNAs. Has endoribonuclease activity. In Thermofilum pendens (strain DSM 2475 / Hrk 5), this protein is Protein pelota homolog.